The primary structure comprises 269 residues: Hydroxyethylthiazole kinase (269 aa).

Residue methionine 46 coordinates substrate. Residues arginine 121 and threonine 166 each contribute to the ATP site. A substrate-binding site is contributed by glycine 193.

This sequence belongs to the Thz kinase family. Mg(2+) serves as cofactor.

The enzyme catalyses 5-(2-hydroxyethyl)-4-methylthiazole + ATP = 4-methyl-5-(2-phosphooxyethyl)-thiazole + ADP + H(+). Its pathway is cofactor biosynthesis; thiamine diphosphate biosynthesis; 4-methyl-5-(2-phosphoethyl)-thiazole from 5-(2-hydroxyethyl)-4-methylthiazole: step 1/1. Its function is as follows. Catalyzes the phosphorylation of the hydroxyl group of 4-methyl-5-beta-hydroxyethylthiazole (THZ). In Limosilactobacillus reuteri (strain DSM 20016) (Lactobacillus reuteri), this protein is Hydroxyethylthiazole kinase.